Reading from the N-terminus, the 607-residue chain is Protease Do-like 2, chloroplastic (607 aa).

Residues Ser-41–Thr-104 are disordered. Positions Pro-87 to Thr-104 are enriched in basic and acidic residues. Positions Val-118–Tyr-317 are serine protease. Catalysis depends on charge relay system residues His-159, Asp-190, and Ser-268. Residues Leu-308–Asp-403 form the PDZ domain.

This sequence belongs to the peptidase S1C family.

It localises to the plastid. Its subcellular location is the chloroplast thylakoid membrane. Functionally, serine protease that performs the primary cleavage of the photodamaged D1 protein in plant photosystem II. The protein is Protease Do-like 2, chloroplastic (DEGP2) of Arabidopsis thaliana (Mouse-ear cress).